The following is a 367-amino-acid chain: Dual-specificity RNA methyltransferase RlmN (367 aa).

E91 functions as the Proton acceptor in the catalytic mechanism. The Radical SAM core domain maps to 102–337 (GKVRMTQCLS…AIIRKSKGQD (236 aa)). A disulfide bridge connects residues C109 and C342. 3 residues coordinate [4Fe-4S] cluster: C116, C120, and C123. S-adenosyl-L-methionine is bound by residues 169-170 (GE), S201, 223-225 (SLH), and N299. C342 acts as the S-methylcysteine intermediate in catalysis.

Belongs to the radical SAM superfamily. RlmN family. [4Fe-4S] cluster serves as cofactor.

The protein resides in the cytoplasm. It carries out the reaction adenosine(2503) in 23S rRNA + 2 reduced [2Fe-2S]-[ferredoxin] + 2 S-adenosyl-L-methionine = 2-methyladenosine(2503) in 23S rRNA + 5'-deoxyadenosine + L-methionine + 2 oxidized [2Fe-2S]-[ferredoxin] + S-adenosyl-L-homocysteine. The enzyme catalyses adenosine(37) in tRNA + 2 reduced [2Fe-2S]-[ferredoxin] + 2 S-adenosyl-L-methionine = 2-methyladenosine(37) in tRNA + 5'-deoxyadenosine + L-methionine + 2 oxidized [2Fe-2S]-[ferredoxin] + S-adenosyl-L-homocysteine. In terms of biological role, specifically methylates position 2 of adenine 2503 in 23S rRNA and position 2 of adenine 37 in tRNAs. m2A2503 modification seems to play a crucial role in the proofreading step occurring at the peptidyl transferase center and thus would serve to optimize ribosomal fidelity. The polypeptide is Dual-specificity RNA methyltransferase RlmN (Nitratidesulfovibrio vulgaris (strain DSM 19637 / Miyazaki F) (Desulfovibrio vulgaris)).